A 409-amino-acid polypeptide reads, in one-letter code: Immediate early response gene 5-like protein (409 aa).

Disordered regions lie at residues Q168–S237 and G312–P335. Positions Q184–P195 are enriched in pro residues. Low complexity-rich tracts occupy residues A196–P212 and P220–S237. Residues Q313–G324 are compositionally biased toward acidic residues.

Belongs to the IER family.

This Rattus norvegicus (Rat) protein is Immediate early response gene 5-like protein (Ier5l).